A 384-amino-acid polypeptide reads, in one-letter code: Soluble hydrogenase, small subunit (384 aa).

Lys194 carries the N6-(pyridoxal phosphate)lysine modification.

It belongs to the class-V pyridoxal-phosphate-dependent aminotransferase family. Heterodimer of a large and a small subunit. Pyridoxal 5'-phosphate serves as cofactor.

The protein localises to the cytoplasm. Its function is as follows. Soluble hydrogenase catalyzes both production and consumption of hydrogen from suitable artificial electron donors or acceptors. This subunit catalyzes the tritium-exchange activity. In Synechococcus sp. (strain PCC 6716), this protein is Soluble hydrogenase, small subunit.